Here is a 108-residue protein sequence, read N- to C-terminus: Nucleoid-associated protein CHAB381_0200 (108 aa).

This sequence belongs to the YbaB/EbfC family. As to quaternary structure, homodimer.

It is found in the cytoplasm. The protein localises to the nucleoid. Its function is as follows. Binds to DNA and alters its conformation. May be involved in regulation of gene expression, nucleoid organization and DNA protection. This is Nucleoid-associated protein CHAB381_0200 from Campylobacter hominis (strain ATCC BAA-381 / DSM 21671 / CCUG 45161 / LMG 19568 / NCTC 13146 / CH001A).